The chain runs to 252 residues: Segregation and condensation protein A (252 aa).

Residues E117–F136 are disordered.

Belongs to the ScpA family. Component of a cohesin-like complex composed of ScpA, ScpB and the Smc homodimer, in which ScpA and ScpB bind to the head domain of Smc. The presence of the three proteins is required for the association of the complex with DNA.

The protein localises to the cytoplasm. Participates in chromosomal partition during cell division. May act via the formation of a condensin-like complex containing Smc and ScpB that pull DNA away from mid-cell into both cell halves. The sequence is that of Segregation and condensation protein A from Bacillus pumilus (strain SAFR-032).